Consider the following 262-residue polypeptide: WUSCHEL-related homeobox 11 (262 aa).

Positions 1 to 11 (MDGGHSPDRHA) are enriched in basic and acidic residues. 2 disordered regions span residues 1–21 (MDGG…PVRS) and 79–115 (RRRQ…GHAG). A DNA-binding region (homeobox) is located at residues 18–82 (PVRSRWTPKP…NRRSRSRRRQ (65 aa)). Over residues 84-112 (QLQAQAQAAAAAASSGSPPTASSGGLAPG) the composition is skewed to low complexity.

The protein belongs to the WUS homeobox family. Interacts with ERF3.

It is found in the nucleus. Its function is as follows. Transcription factor which may be involved in developmental processes. Promotes the development of crown roots (both initiation and elongation), main components of the fibrous root system, by regulating the expression of genes required for crown root development and hormone-responsive genes involved in cytokinin (e.g. RR1, RR2, RR3 and RR4) and auxin (e.g. IAA5, IAA11, IAA23 and IAA31) signaling. In Oryza sativa subsp. indica (Rice), this protein is WUSCHEL-related homeobox 11.